Here is a 93-residue protein sequence, read N- to C-terminus: Small ribosomal subunit protein uS19 (93 aa).

This sequence belongs to the universal ribosomal protein uS19 family.

Protein S19 forms a complex with S13 that binds strongly to the 16S ribosomal RNA. The polypeptide is Small ribosomal subunit protein uS19 (Leptospira borgpetersenii serovar Hardjo-bovis (strain JB197)).